Reading from the N-terminus, the 279-residue chain is MQERGLVGLGLRREMLSEFCQQLPSAIDFLEVAPENWMTLGGKYGKQFRQLTEQHTFFCHGLSLSIGSPEPLDLEFVRRIKAFMDLHQIDVYSEHLSYCSGAGHLYDLMPIPFTEAAVKHVARRVKQVEDILERPLILENVSFYAAPSAQMTELAFLTAVLEEADCKLLLDVNNIYVNSINHQYDALAFLKAMPTERIAYLHIAGHFKESEELLIDTHGSDINAPVWALLDSCYAEHGVLPTLLERDFNLPATAHLLDEINQIHAYQARAKSNLDKRIA.

It belongs to the UPF0276 family.

The chain is UPF0276 protein SO_2008 from Shewanella oneidensis (strain ATCC 700550 / JCM 31522 / CIP 106686 / LMG 19005 / NCIMB 14063 / MR-1).